The following is a 299-amino-acid chain: uncharacterized protein (299 aa).

The disordered stretch occupies residues M1–V38.

This sequence belongs to the calycin superfamily. Fatty-acid binding protein (FABP) family.

This is an uncharacterized protein from Caenorhabditis elegans.